The sequence spans 381 residues: L-lactate dehydrogenase (381 aa).

Residues M1–G380 enclose the FMN hydroxy acid dehydrogenase domain. Y24 provides a ligand contact to substrate. FMN is bound by residues S106 and Q127. Residue Y129 participates in substrate binding. Residue T155 participates in FMN binding. Residue R164 participates in substrate binding. K251 contacts FMN. H275 (proton acceptor) is an active-site residue. R278 contributes to the substrate binding site. D306–R330 is a binding site for FMN.

It belongs to the FMN-dependent alpha-hydroxy acid dehydrogenase family. As to quaternary structure, homotetramer. FMN serves as cofactor.

The protein resides in the cell inner membrane. The catalysed reaction is (S)-lactate + A = pyruvate + AH2. Functionally, catalyzes the conversion of L-lactate to pyruvate. Is coupled to the respiratory chain. The sequence is that of L-lactate dehydrogenase from Pseudomonas putida (strain W619).